The following is a 147-amino-acid chain: 3-hydroxyacyl-[acyl-carrier-protein] dehydratase FabZ (147 aa).

Histidine 53 is a catalytic residue.

The protein belongs to the thioester dehydratase family. FabZ subfamily.

It is found in the cytoplasm. The enzyme catalyses a (3R)-hydroxyacyl-[ACP] = a (2E)-enoyl-[ACP] + H2O. Functionally, involved in unsaturated fatty acids biosynthesis. Catalyzes the dehydration of short chain beta-hydroxyacyl-ACPs and long chain saturated and unsaturated beta-hydroxyacyl-ACPs. This is 3-hydroxyacyl-[acyl-carrier-protein] dehydratase FabZ from Synechococcus sp. (strain WH7803).